Reading from the N-terminus, the 163-residue chain is Choriogonadotropin subunit beta (163 aa).

The signal sequence occupies residues 1–20 (MEMLQGLLLCLLLSTGGAWA). 6 cysteine pairs are disulfide-bonded: Cys29–Cys76, Cys43–Cys91, Cys46–Cys129, Cys54–Cys107, Cys58–Cys109, and Cys112–Cys119. Asn50 is a glycosylation site (N-linked (GlcNAc...) asparagine). An N-linked (GlcNAc...) asparagine glycan is attached at Asn124. Polar residues predominate over residues 135–151 (QDSSSNVPPSNLTSPSQ). The tract at residues 135 to 163 (QDSSSNVPPSNLTSPSQLLEPAVTPLVPQ) is disordered. An O-linked (GalNAc...) serine glycan is attached at Ser139. Asn145 carries N-linked (GlcNAc...) asparagine glycosylation. An O-linked (GalNAc...) serine glycan is attached at Ser150.

Belongs to the glycoprotein hormones subunit beta family. Heterodimer of a common alpha chain and a unique beta chain which confers biological specificity to thyrotropin, lutropin, follitropin and gonadotropin.

The protein resides in the secreted. Its function is as follows. Stimulates the ovaries to synthesize the steroids that are essential for the maintenance of pregnancy. This is Choriogonadotropin subunit beta (CGB) from Saimiri boliviensis boliviensis (Bolivian squirrel monkey).